Consider the following 673-residue polypeptide: tRNA uridine 5-carboxymethylaminomethyl modification enzyme MnmG (673 aa).

17–22 (GGGHAG) is a binding site for FAD. An NAD(+)-binding site is contributed by 284 to 298 (GPRYCPSVEDKINRF).

The protein belongs to the MnmG family. Homodimer. Heterotetramer of two MnmE and two MnmG subunits. It depends on FAD as a cofactor.

Its subcellular location is the cytoplasm. In terms of biological role, NAD-binding protein involved in the addition of a carboxymethylaminomethyl (cmnm) group at the wobble position (U34) of certain tRNAs, forming tRNA-cmnm(5)s(2)U34. The protein is tRNA uridine 5-carboxymethylaminomethyl modification enzyme MnmG of Polaromonas sp. (strain JS666 / ATCC BAA-500).